Reading from the N-terminus, the 92-residue chain is Small ribosomal subunit protein bS20 (92 aa).

The disordered stretch occupies residues methionine 1–leucine 24.

The protein belongs to the bacterial ribosomal protein bS20 family.

Binds directly to 16S ribosomal RNA. The chain is Small ribosomal subunit protein bS20 from Paraburkholderia xenovorans (strain LB400).